Reading from the N-terminus, the 897-residue chain is MDSQRSHHILTRLTKIRRRPQQPLTDFTELYSRIANETIYYLNLEEKKRYKEALQGWKALTTDVLFKQTLIEHNYPNTQSYTKDEVSLQNGIRELYHKSVMHLKRVKKLVREEPAPRNDMPSSKTYTNHSSSFTRSTEPPPVFQMVPGRMMKTLRNRNACGYKTAYSNPSLSSYGNSTSIKRGEDAENIRVNFVPSKPLSNNASRQHKNPIEHNDPPLKKETELYSDKYISEPILIDLTNDEDDHDVGILKGHNVFDEEESDGFEFDVSDYYDNFSEVDVEEEEEEKEERRRIKTLEAIQQQMSDLSVTSSTSSNKSVSSSENVPGSCIQSLPTTAPALPSLPPPPLLNVDRASSTGALKPHSLETSTTMDSSKIRNPQISKLMKNNHVPYLKGTKSTPTLITKSTPTFITRSKSNTKPIIKSNASSPTSSLTVPNSVIQKPKTAAMAAKRVLNSKKVASNPALNTTKKSHPILKSKTAKVPNSSSKKTSSHPSRPVSNSKPYSHGASQNKKPSKNQTTSMSKTNRKIPAQKKIGSPKIEDVGTEDATEHATSLNEQREEPEIDKKVLREILEDEIIDSLQGVDRQAAKQIFAEIVVHGDEVHWDDIAGLESAKYSLKEAVVYPFLRPDLFRGLREPVRGMLLFGPPGTGKTMLARAVATESHSTFFSISASSLTSKYLGESEKLVRALFAIAKKLSPSIIFVDEIDSIMGSRNNENENESSRRIKNEFLVQWSSLSSAAAGSNKSNTNNSDTNGDEDDTRVLVLAATNLPWSIDEAARRRFVRRQYIPLPEDQTRHVQFKKLLSHQKHTLTESDFDELVKITEGYSGSDITSLAKDAAMGPLRDLGDKLLETEREMIRPIGLVDFKNSLVYIKPSVSQDGLVKYEKWASQFGSSGS.

Disordered regions lie at residues 112-144 (EEPAPRNDMPSSKTYTNHSSSFTRSTEPPPVFQ), 195-219 (PSKPLSNNASRQHKNPIEHNDPPLK), 302-398 (QMSD…TKST), 413-438 (SKSNTKPIIKSNASSPTSSLTVPNSV), and 456-561 (KKVA…REEP). Residues 120–137 (MPSSKTYTNHSSSFTRST) are compositionally biased toward polar residues. Basic and acidic residues predominate over residues 209–219 (NPIEHNDPPLK). The segment covering 307-321 (SVTSSTSSNKSVSSS) has biased composition (low complexity). A compositionally biased stretch (polar residues) spans 364 to 380 (LETSTTMDSSKIRNPQI). Residues 468–478 (KKSHPILKSKT) show a composition bias toward basic residues. A compositionally biased stretch (low complexity) spans 480–496 (KVPNSSSKKTSSHPSRP). The span at 497–523 (VSNSKPYSHGASQNKKPSKNQTTSMSK) shows a compositional bias: polar residues. Position 536 is a phosphoserine (S536). Position 645–652 (645–652 (GPPGTGKT)) interacts with ATP.

This sequence belongs to the AAA ATPase family. Interacts with SPT2/SIN1.

This is Protein SAP1 (SAP1) from Saccharomyces cerevisiae (strain ATCC 204508 / S288c) (Baker's yeast).